The primary structure comprises 54 residues: Secreted virulence factor MC69 (54 aa).

A signal peptide spans 1–18 (MKFTLALLTTLCASLASA). C38 and C48 form a disulfide bridge.

It belongs to the MC69 virulence factor family.

The protein resides in the secreted. Its function is as follows. Secreted protein required for appressorial penetration of intact host epidermal cells and for pathogenicity. This Colletotrichum orbiculare (strain 104-T / ATCC 96160 / CBS 514.97 / LARS 414 / MAFF 240422) (Cucumber anthracnose fungus) protein is Secreted virulence factor MC69.